Consider the following 292-residue polypeptide: Carbapenem-hydrolyzing beta-lactamase transcriptional activator (292 aa).

Residues 5–62 (IPLNALRAFEASARYLNFTKAGLELHVSQAAVSQHVRTLEAILGVNLFKRLPRGLQLT) enclose the HTH lysR-type domain. A DNA-binding region (H-T-H motif) is located at residues 22-41 (FTKAGLELHVSQAAVSQHVR).

The protein belongs to the LysR transcriptional regulatory family.

This protein is a positive regulator of gene expression of carbapenem-hydrolyzing beta-lactamase (smeA). Seems to also be a repressor of its own transcription. The chain is Carbapenem-hydrolyzing beta-lactamase transcriptional activator (smeR) from Serratia marcescens.